The following is a 164-amino-acid chain: S-ribosylhomocysteine lyase (164 aa).

3 residues coordinate Fe cation: His-61, His-65, and Cys-131.

It belongs to the LuxS family. Homodimer. Fe cation is required as a cofactor.

The enzyme catalyses S-(5-deoxy-D-ribos-5-yl)-L-homocysteine = (S)-4,5-dihydroxypentane-2,3-dione + L-homocysteine. Involved in the synthesis of autoinducer 2 (AI-2) which is secreted by bacteria and is used to communicate both the cell density and the metabolic potential of the environment. The regulation of gene expression in response to changes in cell density is called quorum sensing. Catalyzes the transformation of S-ribosylhomocysteine (RHC) to homocysteine (HC) and 4,5-dihydroxy-2,3-pentadione (DPD). This Bifidobacterium longum (strain DJO10A) protein is S-ribosylhomocysteine lyase.